The primary structure comprises 339 residues: tRNA N6-adenosine threonylcarbamoyltransferase (339 aa).

Residues histidine 114 and histidine 118 each contribute to the Fe cation site. Residues 137-141 (VVSGG), aspartate 170, glycine 183, aspartate 187, and asparagine 277 each bind substrate. A Fe cation-binding site is contributed by aspartate 305.

The protein belongs to the KAE1 / TsaD family. Fe(2+) is required as a cofactor.

The protein resides in the cytoplasm. It catalyses the reaction L-threonylcarbamoyladenylate + adenosine(37) in tRNA = N(6)-L-threonylcarbamoyladenosine(37) in tRNA + AMP + H(+). In terms of biological role, required for the formation of a threonylcarbamoyl group on adenosine at position 37 (t(6)A37) in tRNAs that read codons beginning with adenine. Is involved in the transfer of the threonylcarbamoyl moiety of threonylcarbamoyl-AMP (TC-AMP) to the N6 group of A37, together with TsaE and TsaB. TsaD likely plays a direct catalytic role in this reaction. The sequence is that of tRNA N6-adenosine threonylcarbamoyltransferase from Clostridium beijerinckii (strain ATCC 51743 / NCIMB 8052) (Clostridium acetobutylicum).